The following is a 180-amino-acid chain: Large ribosomal subunit protein uL5 (180 aa).

Belongs to the universal ribosomal protein uL5 family. Part of the 50S ribosomal subunit; part of the 5S rRNA/L5/L18/L25 subcomplex. Contacts the 5S rRNA and the P site tRNA. Forms a bridge to the 30S subunit in the 70S ribosome.

Its function is as follows. This is one of the proteins that bind and probably mediate the attachment of the 5S RNA into the large ribosomal subunit, where it forms part of the central protuberance. In the 70S ribosome it contacts protein S13 of the 30S subunit (bridge B1b), connecting the 2 subunits; this bridge is implicated in subunit movement. Contacts the P site tRNA; the 5S rRNA and some of its associated proteins might help stabilize positioning of ribosome-bound tRNAs. This Lactococcus lactis subsp. lactis (strain IL1403) (Streptococcus lactis) protein is Large ribosomal subunit protein uL5.